A 311-amino-acid chain; its full sequence is MEVKIFNTQDVQDFLRVASGLEQEGGNPRVKQIIHRVLSDLYKAIEDLNITSDEYWAGVAYLNQLGANQEAGLLSPGLGFDHYLDMRMDAEDAALGIENATPRTIEGPLYVAGAPESVGYARMDDGSDPNGHTLILHGTIFDADGKPLPNAKVEIWHANTKGFYSHFDPTGEQQAFNMRRSIITDENGQYRVRTILPAGYGCPPEGPTQQLLNQLGRHGNRPAHIHYFVSADGHRKLTTQINVAGDPYTYDDFAYATREGLVVDAVEHTDPEAIKANDVEGPFAEMVFDLKLTRLVDGVDNQVVDRPRLAV.

Y164 is a catechol binding site. The Fe cation site is built by Y164, Y200, H224, and H226. 224-226 contributes to the catechol binding site; the sequence is HIH.

Belongs to the intradiol ring-cleavage dioxygenase family. Homodimer. It depends on Fe(3+) as a cofactor.

The catalysed reaction is catechol + O2 = cis,cis-muconate + 2 H(+). The protein operates within aromatic compound metabolism; beta-ketoadipate pathway; 5-oxo-4,5-dihydro-2-furylacetate from catechol: step 1/3. This is Catechol 1,2-dioxygenase from Acinetobacter baylyi (strain ATCC 33305 / BD413 / ADP1).